A 496-amino-acid polypeptide reads, in one-letter code: Glycerol kinase (496 aa).

ADP is bound at residue threonine 12. Threonine 12, threonine 13, and serine 14 together coordinate ATP. Threonine 12 lines the sn-glycerol 3-phosphate pocket. Arginine 16 is an ADP binding site. Sn-glycerol 3-phosphate-binding residues include arginine 82, glutamate 83, tyrosine 134, and aspartate 244. The glycerol site is built by arginine 82, glutamate 83, tyrosine 134, aspartate 244, and glutamine 245. Threonine 266 and glycine 309 together coordinate ADP. Residues threonine 266, glycine 309, glutamine 313, and glycine 410 each contribute to the ATP site. Residues glycine 410 and asparagine 414 each coordinate ADP.

The protein belongs to the FGGY kinase family.

It catalyses the reaction glycerol + ATP = sn-glycerol 3-phosphate + ADP + H(+). The protein operates within polyol metabolism; glycerol degradation via glycerol kinase pathway; sn-glycerol 3-phosphate from glycerol: step 1/1. Inhibited by fructose 1,6-bisphosphate (FBP). Key enzyme in the regulation of glycerol uptake and metabolism. Catalyzes the phosphorylation of glycerol to yield sn-glycerol 3-phosphate. The chain is Glycerol kinase from Treponema denticola (strain ATCC 35405 / DSM 14222 / CIP 103919 / JCM 8153 / KCTC 15104).